The chain runs to 184 residues: Type-1 fimbrial protein, A chain (184 aa).

An N-terminal signal peptide occupies residues 1-23 (MKIKTLAIVVLSALSLSSTAALA). Cys-46 and Cys-86 are oxidised to a cystine.

The protein belongs to the fimbrial protein family.

The protein localises to the fimbrium. In terms of biological role, fimbriae (also called pili), polar filaments radiating from the surface of the bacterium to a length of 0.5-1.5 micrometers and numbering 100-300 per cell, enable bacteria to colonize the epithelium of specific host organs. This Escherichia coli protein is Type-1 fimbrial protein, A chain.